Consider the following 310-residue polypeptide: MPLLVEGRRVRLPQSAGDLVRAHPPLEERARLLRGQSVQQVGPQGLLYVQQRELAVTSPKDGSISILGSDDATTCHIVVLRHTGNGATCLTHCDGTDTKAEVPLIMNSIKSFSDHAQCGRLEVHLVGGFSDDRQLSQKLTHQLLSEFDRQEDDIHLVTLCVTELNDREENENHFPVIYGIAVNIKTAEIYRASFQDRGPEEQLRAARTLAGGPMISIYDAETEQLRIGPYSWTPFPHVDFWLHQDDKQILENLSTSPLAEPPHFVEHIRSTLMFLKKHPSPAHTLFSGNKALLYKKNEDGLWEKISSPGS.

In terms of assembly, monomer.

Its subcellular location is the cytoplasm. It carries out the reaction N-terminal L-asparaginyl-[protein] + H2O + H(+) = N-terminal L-aspartyl-[protein] + NH4(+). Its activity is regulated as follows. Inhibited by micromolar concentrations of copper and zinc ions. In terms of biological role, N-terminal asparagine deamidase that mediates deamidation of N-terminal asparagine residues to aspartate. Required for the ubiquitin-dependent turnover of intracellular proteins that initiate with Met-Asn. These proteins are acetylated on the retained initiator methionine and can subsequently be modified by the removal of N-acetyl methionine by acylaminoacid hydrolase (AAH). Conversion of the resulting N-terminal asparagine to aspartate by NTAN1/PNAD renders the protein susceptible to arginylation, polyubiquitination and degradation as specified by the N-end rule. This enzyme does not act on substrates with internal or C-terminal asparagines and does not act on glutamine residues in any position, nor on acetylated N-terminal peptidyl Asn. In Homo sapiens (Human), this protein is Protein N-terminal asparagine amidohydrolase (NTAN1).